We begin with the raw amino-acid sequence, 219 residues long: UPF0502 protein HCH_06091 (219 aa).

It belongs to the UPF0502 family.

In Hahella chejuensis (strain KCTC 2396), this protein is UPF0502 protein HCH_06091.